The chain runs to 1166 residues: IQ domain-containing protein N (1166 aa).

Polar residues predominate over residues 1–19 (MQPATQLQFTNHLSPNGQC). The interval 1 to 56 (MQPATQLQFTNHLSPNGQCILQPPPTPSLPDKMEKAPPQPQHEGLKSEEHLPQQPA) is disordered. The IQ 1 domain maps to 89-118 (HARAATLIQANWRGYRLRQKLISQMTAAKA). Disordered regions lie at residues 431-450 (VCPG…VATP), 769-797 (LSAP…TTQG), and 829-848 (DSGA…PCQE). IQ domains lie at 907–932 (AVTT…RRAT), 928–955 (HRRA…RATT), 952–979 (RATT…MLHP), 1091–1119 (RDKA…MAAK), and 1114–1143 (QQMA…LLGP). Residues 1145-1166 (DPWSSSQHMHWASSQHTHWPGI) form a disordered region. Residues 1147–1166 (WSSSQHMHWASSQHTHWPGI) show a composition bias toward polar residues.

Interacts with calmodulin.

Essential for spermiogenesis and fertilization. May be required for manchette assembly in elongating spermatids. The polypeptide is IQ domain-containing protein N (IQCN) (Macaca fascicularis (Crab-eating macaque)).